We begin with the raw amino-acid sequence, 335 residues long: Transmembrane protein 120B-A (335 aa).

The stretch at 1-40 forms a coiled coil; that stretch reads MSLQKCQEEWSEIEKEFQQLQETHKVYKQKLEELNSLQNL. 6 helical membrane-spanning segments follow: residues 100-122, 130-150, 157-177, 193-213, 268-288, and 300-320; these read GLYLNLVLGNVNVTLLSTQAKFA, FKLYLTIILLLGAITCRFVLN, VFNFLLVWYYCTLTIRESILI, VSTFLSGVMLTWPDGLMYQIF, FLLPFLFFGHFWQLYNAITLF, and QVFVLALTFLLLFLGNFLTTL.

Belongs to the TMEM120 family.

The protein localises to the nucleus inner membrane. Necessary for efficient adipogenesis. Does not show ion channel activity. The chain is Transmembrane protein 120B-A (tmem120b-a) from Xenopus laevis (African clawed frog).